Consider the following 209-residue polypeptide: Probable peptide export ATP-binding protein YydI (209 aa).

Positions 1–207 (MNIANYTLKV…SVDKLIEVYI (207 aa)) constitute an ABC transporter domain. 33–40 (GKNGVGKS) contributes to the ATP binding site.

Belongs to the ABC transporter superfamily. As to quaternary structure, the complex is composed of two ATP-binding proteins (YydI), two transmembrane proteins (YydJ).

In terms of biological role, suggested to be part of an ABC transporter complex YydIJ involved in export of the modified peptide YydF. Responsible for energy coupling to the transport system. The chain is Probable peptide export ATP-binding protein YydI (yydI) from Bacillus subtilis (strain 168).